The sequence spans 127 residues: UPF0102 protein Cpha266_0037 (127 aa).

The protein belongs to the UPF0102 family.

The polypeptide is UPF0102 protein Cpha266_0037 (Chlorobium phaeobacteroides (strain DSM 266 / SMG 266 / 2430)).